The sequence spans 147 residues: 3-hydroxyacyl-[acyl-carrier-protein] dehydratase FabZ (147 aa).

Residue His48 is part of the active site.

This sequence belongs to the thioester dehydratase family. FabZ subfamily.

The protein resides in the cytoplasm. The enzyme catalyses a (3R)-hydroxyacyl-[ACP] = a (2E)-enoyl-[ACP] + H2O. In terms of biological role, involved in unsaturated fatty acids biosynthesis. Catalyzes the dehydration of short chain beta-hydroxyacyl-ACPs and long chain saturated and unsaturated beta-hydroxyacyl-ACPs. The chain is 3-hydroxyacyl-[acyl-carrier-protein] dehydratase FabZ from Aliarcobacter butzleri (strain RM4018) (Arcobacter butzleri).